The primary structure comprises 61 residues: uncharacterized protein (61 aa).

Transmembrane regions (helical) follow at residues 7 to 24 and 29 to 48; these read FNVFCIVALGSIYGYKLF and VSTTRLIIASVIVLWNIVGL.

The protein resides in the cell membrane. This is an uncharacterized protein from Bacillus subtilis (strain 168).